Consider the following 360-residue polypeptide: C-C chemokine receptor type 4 (360 aa).

The Extracellular segment spans residues Met-1–Glu-39. Residues Leu-40–Tyr-67 form a helical membrane-spanning segment. The Cytoplasmic portion of the chain corresponds to Lys-68 to Tyr-77. The helical transmembrane segment at Leu-78 to Tyr-98 threads the bilayer. At Ala-99–Lys-111 the chain is on the extracellular side. A disulfide bond links Cys-110 and Cys-187. A helical transmembrane segment spans residues Met-112 to Ile-133. Residues Asp-134 to Thr-150 lie on the Cytoplasmic side of the membrane. A helical transmembrane segment spans residues Leu-151–Phe-175. Residues Ser-176 to Ile-206 lie on the Extracellular side of the membrane. N-linked (GlcNAc...) asparagine glycans are attached at residues Asn-183 and Asn-194. A helical transmembrane segment spans residues Asn-207–Ile-226. Residues Arg-227 to Lys-242 lie on the Cytoplasmic side of the membrane. Residues Met-243–Leu-267 form a helical membrane-spanning segment. Over Val-268–Tyr-284 the chain is Extracellular. Residues Ala-285–Gly-308 traverse the membrane as a helical segment. The Cytoplasmic portion of the chain corresponds to Glu-309–Leu-360.

The protein belongs to the G-protein coupled receptor 1 family. Post-translationally, in natural killer cells, CCL22 binding induces phosphorylation on yet undefined Ser/Thr residues, most probably by beta-adrenergic receptor kinases 1 and 2. Predominantly expressed in the thymus, in peripheral blood leukocytes, including T-cells, mostly CD4+ cells, and basophils, and in platelets; at lower levels, in the spleen and in monocytes. Detected also in macrophages, IL-2-activated natural killer cells and skin-homing memory T-cells, mostly the ones expressing the cutaneous lymphocyte antigen (CLA). Expressed in brain microvascular and coronary artery endothelial cells.

It is found in the cell membrane. Functionally, high affinity receptor for the C-C type chemokines CCL17/TARC, CCL22/MDC and CKLF isoform 1/CKLF1. The activity of this receptor is mediated by G(i) proteins which activate a phosphatidylinositol-calcium second messenger system. Can function as a chemoattractant homing receptor on circulating memory lymphocytes and as a coreceptor for some primary HIV-2 isolates. In the CNS, could mediate hippocampal-neuron survival. The sequence is that of C-C chemokine receptor type 4 (CCR4) from Homo sapiens (Human).